A 386-amino-acid chain; its full sequence is 4-hydroxy-3-methylbut-2-en-1-yl diphosphate synthase (flavodoxin) (386 aa).

Residues cysteine 281, cysteine 284, cysteine 316, and glutamate 323 each contribute to the [4Fe-4S] cluster site.

The protein belongs to the IspG family. Requires [4Fe-4S] cluster as cofactor.

The catalysed reaction is (2E)-4-hydroxy-3-methylbut-2-enyl diphosphate + oxidized [flavodoxin] + H2O + 2 H(+) = 2-C-methyl-D-erythritol 2,4-cyclic diphosphate + reduced [flavodoxin]. The protein operates within isoprenoid biosynthesis; isopentenyl diphosphate biosynthesis via DXP pathway; isopentenyl diphosphate from 1-deoxy-D-xylulose 5-phosphate: step 5/6. Its function is as follows. Converts 2C-methyl-D-erythritol 2,4-cyclodiphosphate (ME-2,4cPP) into 1-hydroxy-2-methyl-2-(E)-butenyl 4-diphosphate. The protein is 4-hydroxy-3-methylbut-2-en-1-yl diphosphate synthase (flavodoxin) of Corynebacterium jeikeium (strain K411).